Here is a 541-residue protein sequence, read N- to C-terminus: MLFCDDSKKYLKEQNINLKNEFDKDDKRVEKFSLKHQNIYFDYSKNLINNYILKSLLESAEKSSLKDKIKQMFNGAKINSTEHRAVLHTALRDLSSTPLIVDGQDIRQEVTKEKQRVKELVEKVVSGRWRGFSGKKITDIVNIGIGGSDLGPKMVVRALQPYHCTDLKVHFVSNVDADSLLQALHVVDPETTLFIIASKSFSTEETLLNSISAREWLLDHYYEDEKAVANHFVAISSKLDKVKEFGIDLEHCYKMWDWVGGRYSLWSSIGMSIAFAIGYDNFEKLLAGAYSVDKYFKETEFSKNIPVIMALLASYYSCTYNSQSQALLPYDERLCYFVDYLQQADMESNGKSVNIAGGTVNYQTGVVLWGGVGTNGQHAFHQLLHQGNIFIPVDFIAIATSHHNYDNHQQALLANCFAQSQALMFGQSYDMVYNELLKSGLNETQAKKLAAHKVIPGNRPSTTILLDELSPYSLGALIALYEHKIFVQGVLWDINSYDQWGVELGKKLGKNILKAMNDDSSDEYQNLDDSTRQLIAKVKNK.

Glutamate 347 functions as the Proton donor in the catalytic mechanism. Active-site residues include histidine 378 and lysine 506.

The protein belongs to the GPI family.

It is found in the cytoplasm. The catalysed reaction is alpha-D-glucose 6-phosphate = beta-D-fructose 6-phosphate. Its pathway is carbohydrate biosynthesis; gluconeogenesis. It participates in carbohydrate degradation; glycolysis; D-glyceraldehyde 3-phosphate and glycerone phosphate from D-glucose: step 2/4. Its function is as follows. Catalyzes the reversible isomerization of glucose-6-phosphate to fructose-6-phosphate. The chain is Glucose-6-phosphate isomerase from Francisella tularensis subsp. holarctica (strain OSU18).